Reading from the N-terminus, the 481-residue chain is tRNA pseudouridine(38/39) synthase (481 aa).

N-acetylalanine is present on alanine 2. The span at lysine 29–isoleucine 40 shows a compositional bias: basic and acidic residues. Residues lysine 29–alanine 54 are disordered. Aspartate 118 acts as the Nucleophile in catalysis. Residue tyrosine 195 coordinates substrate. The residue at position 456 (threonine 456) is a Phosphothreonine.

It belongs to the tRNA pseudouridine synthase TruA family.

The protein localises to the nucleus. It catalyses the reaction uridine(38/39) in tRNA = pseudouridine(38/39) in tRNA. Functionally, formation of pseudouridine at position 39 in the anticodon stem and loop of transfer RNAs. The polypeptide is tRNA pseudouridine(38/39) synthase (PUS3) (Bos taurus (Bovine)).